Reading from the N-terminus, the 223-residue chain is Triosephosphate isomerase (223 aa).

10–12 (NFK) is a binding site for substrate. Residue H94 is the Electrophile of the active site. Residue E142 is the Proton acceptor of the active site. Residues I147, G182, and 203–204 (AS) contribute to the substrate site.

This sequence belongs to the triosephosphate isomerase family. As to quaternary structure, homotetramer; dimer of dimers.

It is found in the cytoplasm. It carries out the reaction D-glyceraldehyde 3-phosphate = dihydroxyacetone phosphate. It participates in carbohydrate biosynthesis; gluconeogenesis. The protein operates within carbohydrate degradation; glycolysis; D-glyceraldehyde 3-phosphate from glycerone phosphate: step 1/1. Its function is as follows. Involved in the gluconeogenesis. Catalyzes stereospecifically the conversion of dihydroxyacetone phosphate (DHAP) to D-glyceraldehyde-3-phosphate (G3P). In Archaeoglobus fulgidus (strain ATCC 49558 / DSM 4304 / JCM 9628 / NBRC 100126 / VC-16), this protein is Triosephosphate isomerase.